A 594-amino-acid polypeptide reads, in one-letter code: Actin-histidine N-methyltransferase (594 aa).

The tract at residues 1-23 (MGKKSRVKTQKSGTGATASVSPK) is disordered. A compositionally biased stretch (polar residues) spans 10–23 (QKSGTGATASVSPK). S-adenosyl-L-methionine-binding positions include R75, 104-106 (EGF), R254, 275-279 (DMCNH), and 325-327 (SGF). In terms of domain architecture, SET spans 94–314 (EGFEMVSFKE…AGEQIYIFYG (221 aa)). A disordered region spans residues 553–594 (INGENSIPNGTRLEKEDLNQEQSKRVTEDAKEPSDSTEEVKE). The segment covering 564–594 (RLEKEDLNQEQSKRVTEDAKEPSDSTEEVKE) has biased composition (basic and acidic residues).

Belongs to the class V-like SAM-binding methyltransferase superfamily. SETD3 actin-histidine methyltransferase family. As to quaternary structure, interacts with MYOD1. Phosphorylated by GSK3B, which is required for recognition by the SCF(FBXW7) complex and subsequent degradation. Post-translationally, ubiquitinated by the SCF(FBXW7) complex following phosphorylation by GSK3B, leading to its degradation by the proteasome.

The protein resides in the cytoplasm. It localises to the nucleus. The enzyme catalyses L-histidyl-[protein] + S-adenosyl-L-methionine = N(tele)-methyl-L-histidyl-[protein] + S-adenosyl-L-homocysteine + H(+). Functionally, protein-histidine N-methyltransferase that specifically mediates 3-methylhistidine (tele-methylhistidine) methylation of actin at 'His-73'. Histidine methylation of actin is required for smooth muscle contraction of the laboring uterus during delivery. Does not have protein-lysine N-methyltransferase activity and probably only catalyzes histidine methylation of actin. This chain is Actin-histidine N-methyltransferase, found in Rhinolophus ferrumequinum (Greater horseshoe bat).